Reading from the N-terminus, the 477-residue chain is Calcium uptake protein 1, mitochondrial (477 aa).

Residues methionine 1 to leucine 33 constitute a mitochondrion transit peptide. The disordered stretch occupies residues alanine 57 to glycine 107. Positions lysine 66–alanine 89 are enriched in basic and acidic residues. The polybasic region stretch occupies residues lysine 101–lysine 112. Serine 124 carries the phosphoserine; by PKB modification. A k/R-ring region spans residues lysine 128–arginine 131. Positions threonine 220–glutamine 255 constitute an EF-hand 1 domain. Ca(2+) is bound by residues aspartate 233, asparagine 235, aspartate 237, glutamate 239, and glutamate 244. Residues arginine 261–arginine 265 form a k/R-ring region. Residues lysine 356 to isoleucine 376 enclose the EF-hand 2; degenerate domain. The EF-hand 3 domain maps to leucine 410–arginine 445. Aspartate 423, aspartate 425, asparagine 427, glutamate 429, and glutamate 434 together coordinate Ca(2+). Arginine 457 is modified (asymmetric dimethylarginine). Residues arginine 457 to glutamine 467 are C-helix region.

This sequence belongs to the MICU1 family. MICU1 subfamily. In terms of assembly, heterodimer; disulfide-linked; heterodimerizes with MICU2 or MICU3. Homodimer; disulfide-linked. Component of the uniplex complex, composed of MCU, EMRE/SMDT1, MICU1 and MICU2 (or MICU3) in a 4:4:1:1 stoichiometry. The composition of calcium sensors within the uniplex complex can differ depending on tissues: a MICU1 homodimer can be present instead of the MICU1-MICU2 heterodimer in skeletal-muscle and kidney. MICU1 is recruited to the uniplex complex by EMRE/SMDT1, and it associates with MCU at low calcium levels, occluding the pore of the MCU channel. Associates with the MICOS complex. Interacts with SLC25A23. Interacts with CHCHD4/MIA40; which introduces the interchain disulfide bond with MICU2. Interacts (when methylated) with UCP2; leading to decrease the calcium sensitivity of MICU1. As to quaternary structure, heterodimer; disulfide-linked; heterodimerizes with MICU2 or MICU3. Heterodimerizes with MICU3 in skeletal muscle. Component of the uniplex complex, composed of MCU, EMRE/SMDT1, MICU1 and MICU2 (or MICU3) in a 4:4:1:1 stoichiometry. Also localizes to mitochondrial cristae junctions. In terms of processing, phosphorylation at Ser-124 by AKT1 impairs its maturation and stability. Post-translationally, asymmetric dimethylation at Arg-457 by PRMT1 decreases the calcium sensitivity of MICU1 by promoting interaction with UCP2. Degraded by YME1L1 when not complexed as homodimer or heterodimer. Not degraded when complexed as homodimer or heterodimer; the presence of the interchain disulfide bond protecting MICU1 from degradation by YME1L1. In terms of tissue distribution, expressed in skeletal muscle, heart, kidney, liver, brain, lung, fat and spleen. Specifically expressed in the skeletal muscle.

It is found in the mitochondrion intermembrane space. The protein localises to the mitochondrion inner membrane. Calcium sensor of the mitochondrial calcium uniporter (MCU) channel, which senses calcium level via its EF-hand domains. MICU1 and MICU2 (or MICU3) form a disulfide-linked heterodimer that stimulates and inhibits MCU activity, depending on the concentration of calcium. At low calcium levels, MICU1 occludes the pore of the MCU channel, preventing mitochondrial calcium uptake. At higher calcium levels, calcium-binding to MICU1 and MICU2 (or MICU3) induces a conformational change that weakens MCU-MICU1 interactions and moves the MICU1-MICU2 heterodimer away from the pore, allowing calcium permeation through the MCU channel. Also required to protect against manganese toxicity by preventing manganese uptake by MCU: mechanistically, manganese-binding to its EF-hand domains does not induce any conformational change, maintaining MCU pore occlusion. Acts as a regulator of mitochondrial cristae structure independently of its ability to regulate the mitochondrial calcium uniporter channel. Regulates glucose-dependent insulin secretion in pancreatic beta-cells by regulating mitochondrial calcium uptake. Induces T-helper 1-mediated autoreactivity, which is accompanied by the release of IFNG. Its function is as follows. Isoform that regulates mitochondrial calcium uniporter (MCU) in the skeletal muscle. Compared to other isoforms, this isoform has higher affinity for calcium, promoting mitochondrial calcium uptake at lower calcium concentrations. This allows a rapid response of mitochondrial metabolism and ensures sustained ATP production needed for resistance and strenuous exercise. In Mus musculus (Mouse), this protein is Calcium uptake protein 1, mitochondrial.